The sequence spans 268 residues: Homeobox protein Hox-C4a (268 aa).

Positions 70–129 are disordered; the sequence is PEPDTQRGHGLPHAGHLLGKGQSASCEPPPLPLSPATPSAASSACNQATPEHPNSSASAK. Low complexity-rich tracts occupy residues 77–95 and 105–114; these read GHGLPHAGHLLGKGQSASC and ATPSAASSAC. Positions 115 to 128 are enriched in polar residues; it reads NQATPEHPNSSASA. The Antp-type hexapeptide signature appears at 133–138; the sequence is VYPWMK. Positions 154–213 form a DNA-binding region, homeobox; sequence PKRSRTAYTRQQVLELEKEFHYNRYLTRRRRIEIAHSLVLSERQIKIWFQNRRMKWKKDH. The segment at 212–268 is disordered; sequence DHRLPNTKVRSSSSTGISSGSNTSSAAGVVAAASTTNTMSASEDLSGTERGEDITRL. A compositionally biased stretch (low complexity) spans 222 to 253; sequence SSSSTGISSGSNTSSAAGVVAAASTTNTMSAS. The span at 258–268 shows a compositional bias: basic and acidic residues; the sequence is GTERGEDITRL.

It belongs to the Antp homeobox family. Deformed subfamily.

The protein localises to the nucleus. Functionally, sequence-specific transcription factor which is part of a developmental regulatory system that provides cells with specific positional identities on the anterior-posterior axis. The chain is Homeobox protein Hox-C4a (hoxc4a) from Danio rerio (Zebrafish).